The following is a 271-amino-acid chain: Mannosyl-3-phosphoglycerate phosphatase (271 aa).

Asp-13 functions as the Nucleophile in the catalytic mechanism. Mg(2+)-binding residues include Asp-13, Asp-15, and Asp-214.

It belongs to the HAD-like hydrolase superfamily. MPGP family. The cofactor is Mg(2+).

The protein localises to the cytoplasm. It carries out the reaction 2-O-(alpha-D-mannosyl)-3-phosphoglycerate + H2O = (2R)-2-O-(alpha-D-mannosyl)-glycerate + phosphate. In Escherichia coli O81 (strain ED1a), this protein is Mannosyl-3-phosphoglycerate phosphatase.